The primary structure comprises 748 residues: CCR4-NOT transcription complex subunit 10-B (748 aa).

Positions 1–16 (MAADKAGEQGAEKHEG) are enriched in basic and acidic residues. 3 disordered regions span residues 1-25 (MAAD…GISD), 483-524 (KQEN…PPSS), and 605-634 (VSLG…KQIP). Composition is skewed to polar residues over residues 487 to 509 (GSKA…VCSN) and 605 to 615 (VSLGVSSNEQE).

The protein belongs to the CNOT10 family. In terms of assembly, component of the CCR4-NOT complex. cnot10 and cnot11 form a subcomplex docked to the cnot1 scaffold.

It is found in the cytoplasm. The protein localises to the nucleus. Component of the CCR4-NOT complex which is one of the major cellular mRNA deadenylases and is linked to various cellular processes including bulk mRNA degradation, miRNA-mediated repression, translational repression during translational initiation and general transcription regulation. Additional complex functions may be a consequence of its influence on mRNA expression. Is not required for association of CNOT7 to the CCR4-NOT complex. The sequence is that of CCR4-NOT transcription complex subunit 10-B (cnot10-b) from Xenopus laevis (African clawed frog).